A 445-amino-acid polypeptide reads, in one-letter code: Homoserine O-succinyltransferase (445 aa).

One can recognise an AB hydrolase-1 domain in the interval 45–411; that stretch reads NAVLICHALS…APHGHDSFLF (367 aa). Serine 153 serves as the catalytic Nucleophile. Arginine 223 serves as a coordination point for substrate. Catalysis depends on residues aspartate 373 and histidine 406. Aspartate 407 lines the substrate pocket.

It belongs to the AB hydrolase superfamily. MetX family. Homodimer.

The protein resides in the cytoplasm. The catalysed reaction is L-homoserine + succinyl-CoA = O-succinyl-L-homoserine + CoA. It functions in the pathway amino-acid biosynthesis; L-methionine biosynthesis via de novo pathway; O-succinyl-L-homoserine from L-homoserine: step 1/1. In terms of biological role, transfers a succinyl group from succinyl-CoA to L-homoserine, forming succinyl-L-homoserine. This chain is Homoserine O-succinyltransferase, found in Psychrobacter arcticus (strain DSM 17307 / VKM B-2377 / 273-4).